We begin with the raw amino-acid sequence, 887 residues long: Lon protease homolog 2, peroxisomal (887 aa).

A Lon N-terminal domain is found at 11 to 256 (LGILAFRNKV…KATELVDRHL (246 aa)). Residues 72–101 (YPGGGTDSGERNVKSQPGLSDSRKADGKSQ) are disordered. Residue 409-416 (GPPGVGKT) participates in ATP binding. The Lon proteolytic domain occupies 693–878 (VSNPGVSVGL…EVLEQAFEGG (186 aa)). Residues Ser-784 and Lys-827 contribute to the active site. Residues 885–887 (ARL) carry the Microbody targeting signal motif.

The protein belongs to the peptidase S16 family.

The protein localises to the peroxisome matrix. It carries out the reaction Hydrolysis of proteins in presence of ATP.. Its function is as follows. ATP-dependent serine protease that mediates the selective degradation of misfolded and unassembled polypeptides in the peroxisomal matrix. Necessary for type 2 peroxisome targeting signal (PTS2)-containing protein processing and facilitates peroxisome matrix protein import. In Spinacia oleracea (Spinach), this protein is Lon protease homolog 2, peroxisomal.